The following is a 185-amino-acid chain: Ribosome-recycling factor (185 aa).

Belongs to the RRF family.

It localises to the cytoplasm. Its function is as follows. Responsible for the release of ribosomes from messenger RNA at the termination of protein biosynthesis. May increase the efficiency of translation by recycling ribosomes from one round of translation to another. This chain is Ribosome-recycling factor, found in Shewanella baltica (strain OS223).